The following is a 704-amino-acid chain: Polyribonucleotide nucleotidyltransferase (704 aa).

The Mg(2+) site is built by D487 and D493. The KH domain maps to P554–I613. In terms of domain architecture, S1 motif spans G623–K691.

This sequence belongs to the polyribonucleotide nucleotidyltransferase family. Component of the RNA degradosome, which is a multiprotein complex involved in RNA processing and mRNA degradation. Requires Mg(2+) as cofactor.

Its subcellular location is the cytoplasm. The enzyme catalyses RNA(n+1) + phosphate = RNA(n) + a ribonucleoside 5'-diphosphate. Involved in mRNA degradation. Catalyzes the phosphorolysis of single-stranded polyribonucleotides processively in the 3'- to 5'-direction. This chain is Polyribonucleotide nucleotidyltransferase, found in Xanthomonas campestris pv. campestris (strain B100).